A 256-amino-acid chain; its full sequence is Small ribosomal subunit protein eS1 (256 aa).

Position 2 is an N-acetylalanine; partial (A2).

This sequence belongs to the eukaryotic ribosomal protein eS1 family. Component of the small ribosomal subunit. Mature ribosomes consist of a small (40S) and a large (60S) subunit. The 40S subunit contains about 33 different proteins and 1 molecule of RNA (18S). The 60S subunit contains about 49 different proteins and 3 molecules of RNA (25S, 5.8S and 5S).

Its subcellular location is the cytoplasm. The protein is Small ribosomal subunit protein eS1 of Candida albicans (strain SC5314 / ATCC MYA-2876) (Yeast).